We begin with the raw amino-acid sequence, 171 residues long: 3-hydroxydecanoyl-[acyl-carrier-protein] dehydratase (171 aa).

Residue His70 is part of the active site.

Belongs to the thioester dehydratase family. FabA subfamily. Homodimer.

The protein localises to the cytoplasm. It catalyses the reaction a (3R)-hydroxyacyl-[ACP] = a (2E)-enoyl-[ACP] + H2O. The catalysed reaction is (3R)-hydroxydecanoyl-[ACP] = (2E)-decenoyl-[ACP] + H2O. The enzyme catalyses (2E)-decenoyl-[ACP] = (3Z)-decenoyl-[ACP]. It functions in the pathway lipid metabolism; fatty acid biosynthesis. Its function is as follows. Necessary for the introduction of cis unsaturation into fatty acids. Catalyzes the dehydration of (3R)-3-hydroxydecanoyl-ACP to E-(2)-decenoyl-ACP and then its isomerization to Z-(3)-decenoyl-ACP. Can catalyze the dehydratase reaction for beta-hydroxyacyl-ACPs with saturated chain lengths up to 16:0, being most active on intermediate chain length. The polypeptide is 3-hydroxydecanoyl-[acyl-carrier-protein] dehydratase (Stenotrophomonas maltophilia (strain K279a)).